The primary structure comprises 274 residues: Protein TIFY 11A (274 aa).

Disordered stretches follow at residues 49–95 (SLAL…SQPG) and 139–176 (PINDENNNNKSSMVLPDLNEPTDNNHLTKEQQQQQEQN). The region spanning 92-127 (SQPGSSQLTIFFGGKVLVYNEFPVDKAKEIMEVAKQ) is the Tify domain. Residues 139–150 (PINDENNNNKSS) are compositionally biased toward polar residues. The stretch at 161-185 (DNNHLTKEQQQQQEQNQIVERIARR) forms a coiled coil. The short motif at 182–206 (IARRASLHRFFAKRKDRAVARAPYQ) is the Jas element. A Nuclear localization signal motif is present at residues 183–190 (ARRASLHR). The interval 206 to 274 (QVNQNAGHHR…QSSKDLDLRL (69 aa)) is disordered. Over residues 249–274 (IKSDGDKDDIMKIEEGQSSKDLDLRL) the composition is skewed to basic and acidic residues.

This sequence belongs to the TIFY/JAZ family. As to quaternary structure, homo- and heterodimer. Interacts with MYC2, MYC3, MYC4, AFPH2/NINJA, TIFY10A/JAZ1, TIFY10B/JAZ2, TIFY11B/JAZ6, TIFY5A/JAZ8 and TIFY3B/JAZ12. (Microbial infection) Interacts with the pathogenic Pseudomonas syringae HopZ1a protein. Post-translationally, (Microbial infection) Acetylated by Pseudomonas syringae HopZ1a. In terms of processing, ubiquitinated. Targeted for degradation by the SCF(COI1) E3 ubiquitin ligase-proteasome pathway during jasmonate signaling.

It localises to the nucleus. Its function is as follows. Repressor of jasmonate responses. This is Protein TIFY 11A from Arabidopsis thaliana (Mouse-ear cress).